Here is a 350-residue protein sequence, read N- to C-terminus: Methionine import ATP-binding protein MetN (350 aa).

An ABC transporter domain is found at 2–241; sequence IQIKNLKKEY…PQAPVTRSFV (240 aa). 38 to 45 contributes to the ATP binding site; sequence GHSGAGKS.

This sequence belongs to the ABC transporter superfamily. Methionine importer (TC 3.A.1.24) family. As to quaternary structure, the complex is composed of two ATP-binding proteins (MetN), two transmembrane proteins (MetI) and a solute-binding protein (MetQ).

The protein localises to the cell inner membrane. It carries out the reaction L-methionine(out) + ATP + H2O = L-methionine(in) + ADP + phosphate + H(+). The catalysed reaction is D-methionine(out) + ATP + H2O = D-methionine(in) + ADP + phosphate + H(+). Its function is as follows. Part of the ABC transporter complex MetNIQ involved in methionine import. Responsible for energy coupling to the transport system. This is Methionine import ATP-binding protein MetN from Francisella tularensis subsp. tularensis (strain FSC 198).